We begin with the raw amino-acid sequence, 195 residues long: Proline-rich protein 3 (195 aa).

An N-terminal signal peptide occupies residues 1 to 29 (MKMNFFNSFPQYGVYILGLNLLLCGVSEG).

Component of the acid-insoluble organic matrix of calcified layers of the shell (at protein level).

The protein localises to the secreted. The polypeptide is Proline-rich protein 3 (Lottia gigantea (Giant owl limpet)).